Consider the following 140-residue polypeptide: Gastrula zinc finger protein XlCGF49.1 (140 aa).

5 C2H2-type zinc fingers span residues 6 to 28 (FTCMECSKSFSQKSNLQTHYKIH), 34 to 56 (FTCMECGRTFSQKSTLLSHYKMH), 62 to 84 (FSCSECGKSFSHKNKLTLHQKIH), 90 to 112 (YACTECGKRFPEKSKLKIHWKIH), and 118 to 140 (FSCTECGKKFSRESNLYFHQKMH).

It belongs to the krueppel C2H2-type zinc-finger protein family.

It is found in the nucleus. Its function is as follows. May be involved in transcriptional regulation. The chain is Gastrula zinc finger protein XlCGF49.1 from Xenopus laevis (African clawed frog).